Here is a 339-residue protein sequence, read N- to C-terminus: Anthranilate phosphoribosyltransferase (339 aa).

Residues Gly-79, Gly-82–Asp-83, Ser-87, Asn-89–Thr-92, Lys-107–Ser-115, and Ser-119 contribute to the 5-phospho-alpha-D-ribose 1-diphosphate site. Gly-79 contacts anthranilate. Ser-91 is a Mg(2+) binding site. Asn-110 serves as a coordination point for anthranilate. Arg-165 contacts anthranilate. 2 residues coordinate Mg(2+): Asp-224 and Glu-225.

This sequence belongs to the anthranilate phosphoribosyltransferase family. In terms of assembly, homodimer. The cofactor is Mg(2+).

It catalyses the reaction N-(5-phospho-beta-D-ribosyl)anthranilate + diphosphate = 5-phospho-alpha-D-ribose 1-diphosphate + anthranilate. The protein operates within amino-acid biosynthesis; L-tryptophan biosynthesis; L-tryptophan from chorismate: step 2/5. Its function is as follows. Catalyzes the transfer of the phosphoribosyl group of 5-phosphorylribose-1-pyrophosphate (PRPP) to anthranilate to yield N-(5'-phosphoribosyl)-anthranilate (PRA). This Listeria monocytogenes serotype 4b (strain CLIP80459) protein is Anthranilate phosphoribosyltransferase.